The primary structure comprises 429 residues: Serum response factor-binding protein 1 (429 aa).

Ala-2 bears the N-acetylalanine mark. 2 coiled-coil regions span residues Lys-42–Glu-67 and Leu-108–His-144. 2 stretches are compositionally biased toward polar residues: residues Gln-128–Asn-138 and Lys-146–Arg-160. 2 disordered regions span residues Gln-128–Phe-285 and Glu-311–Asp-429. Basic and acidic residues predominate over residues Asn-183–Pro-195. Lys-190 participates in a covalent cross-link: Glycyl lysine isopeptide (Lys-Gly) (interchain with G-Cter in SUMO2). Ser-203, Ser-205, Ser-264, Ser-279, and Ser-281 each carry phosphoserine. The span at Gly-249–Thr-265 shows a compositional bias: acidic residues. Residues Glu-311–Glu-341 are compositionally biased toward basic and acidic residues. Lys-316 participates in a covalent cross-link: Glycyl lysine isopeptide (Lys-Gly) (interchain with G-Cter in SUMO2). A phosphoserine mark is found at Ser-349, Ser-351, and Ser-367. Basic and acidic residues predominate over residues Asn-357–Ser-367. Polar residues predominate over residues Asn-373 to Lys-383.

As to quaternary structure, interacts with SRF. Forms complexes with SRF and SRF cofactors ARID2, MYOCD and NKX2-5. Interacts with the N-terminus of SLC2A4.

Its subcellular location is the cytoplasm. The protein localises to the perinuclear region. In terms of biological role, may be involved in regulating transcriptional activation of cardiac genes during the aging process. May play a role in biosynthesis and/or processing of SLC2A4 in adipose cells. In Pongo abelii (Sumatran orangutan), this protein is Serum response factor-binding protein 1.